The primary structure comprises 662 residues: Probable lysophospholipase 3 (662 aa).

The N-terminal stretch at 1–19 (MLFNCFGILALLQILPALA) is a signal peptide. 18 N-linked (GlcNAc...) asparagine glycosylation sites follow: N74, N127, N162, N196, N266, N274, N303, N376, N406, N411, N483, N518, N523, N547, N556, N574, N596, and N613. Positions 76–617 (TCPSDYMLRP…EQYCWNGTTV (542 aa)) constitute a PLA2c domain.

The protein belongs to the lysophospholipase family.

It is found in the secreted. It carries out the reaction a 1-acyl-sn-glycero-3-phosphocholine + H2O = sn-glycerol 3-phosphocholine + a fatty acid + H(+). In terms of biological role, catalyzes the release of fatty acids from lysophospholipids. The chain is Probable lysophospholipase 3 (plb3) from Schizosaccharomyces pombe (strain 972 / ATCC 24843) (Fission yeast).